The following is a 207-amino-acid chain: Dephospho-CoA kinase (207 aa).

The DPCK domain occupies 10–207; the sequence is ILGLTGGIGS…FYLTLRGGQS (198 aa). An ATP-binding site is contributed by 18 to 23; sequence GSGKSA.

This sequence belongs to the CoaE family.

It is found in the cytoplasm. It catalyses the reaction 3'-dephospho-CoA + ATP = ADP + CoA + H(+). It functions in the pathway cofactor biosynthesis; coenzyme A biosynthesis; CoA from (R)-pantothenate: step 5/5. Catalyzes the phosphorylation of the 3'-hydroxyl group of dephosphocoenzyme A to form coenzyme A. This chain is Dephospho-CoA kinase, found in Pseudomonas syringae pv. syringae (strain B728a).